A 573-amino-acid chain; its full sequence is Dihydroxy-acid dehydratase (573 aa).

Residue C62 coordinates [2Fe-2S] cluster. Mg(2+) is bound at residue D94. A [2Fe-2S] cluster-binding site is contributed by C135. 2 residues coordinate Mg(2+): D136 and K137. K137 bears the N6-carboxylysine mark. C212 serves as a coordination point for [2Fe-2S] cluster. E463 lines the Mg(2+) pocket. The Proton acceptor role is filled by S489.

This sequence belongs to the IlvD/Edd family. Homodimer. The cofactor is [2Fe-2S] cluster. Requires Mg(2+) as cofactor.

It catalyses the reaction (2R)-2,3-dihydroxy-3-methylbutanoate = 3-methyl-2-oxobutanoate + H2O. The catalysed reaction is (2R,3R)-2,3-dihydroxy-3-methylpentanoate = (S)-3-methyl-2-oxopentanoate + H2O. Its pathway is amino-acid biosynthesis; L-isoleucine biosynthesis; L-isoleucine from 2-oxobutanoate: step 3/4. It participates in amino-acid biosynthesis; L-valine biosynthesis; L-valine from pyruvate: step 3/4. Functionally, functions in the biosynthesis of branched-chain amino acids. Catalyzes the dehydration of (2R,3R)-2,3-dihydroxy-3-methylpentanoate (2,3-dihydroxy-3-methylvalerate) into 2-oxo-3-methylpentanoate (2-oxo-3-methylvalerate) and of (2R)-2,3-dihydroxy-3-methylbutanoate (2,3-dihydroxyisovalerate) into 2-oxo-3-methylbutanoate (2-oxoisovalerate), the penultimate precursor to L-isoleucine and L-valine, respectively. This chain is Dihydroxy-acid dehydratase, found in Renibacterium salmoninarum (strain ATCC 33209 / DSM 20767 / JCM 11484 / NBRC 15589 / NCIMB 2235).